Consider the following 629-residue polypeptide: Interleukin-23 receptor (629 aa).

The first 23 residues, methionine 1–glycine 23, serve as a signal peptide directing secretion. Residues glycine 24 to glycine 355 are Extracellular-facing. Asparagine 29 carries N-linked (GlcNAc...) asparagine; partial glycosylation. Asparagine 47, asparagine 81, and asparagine 141 each carry an N-linked (GlcNAc...) asparagine glycan. 2 consecutive Fibronectin type-III domains span residues isoleucine 127 to isoleucine 217 and isoleucine 219 to threonine 318. Asparagine 180 carries N-linked (GlcNAc...) (high mannose) asparagine glycosylation. Residues asparagine 232 and asparagine 262 are each glycosylated (N-linked (GlcNAc...) asparagine). Asparagine 273 is a glycosylation site (N-linked (GlcNAc...) asparagine; partial). Residues leucine 356–phenylalanine 376 traverse the membrane as a helical segment. Topologically, residues asparagine 377–lysine 629 are cytoplasmic.

This sequence belongs to the type I cytokine receptor family. Type 2 subfamily. As to quaternary structure, heterodimer with IL12RB1. In presence of IL23, the heterodimer forms the IL23 receptor. Interacts with JAK2 and in presence of IL23 with STAT3. Phosphorylated in response to IL23. In terms of tissue distribution, expressed by monocytes, Th1, Th0, NK and dendritic cells. Isoform 1 is specifically expressed in NK cells.

The protein resides in the cell membrane. Its function is as follows. Associates with IL12RB1 to form the interleukin-23 receptor. Binds IL23 and mediates T-cells, NK cells and possibly certain macrophage/myeloid cells stimulation probably through activation of the Jak-Stat signaling cascade. IL23 functions in innate and adaptive immunity and may participate in acute response to infection in peripheral tissues. IL23 may be responsible for autoimmune inflammatory diseases and be important for tumorigenesis. The polypeptide is Interleukin-23 receptor (IL23R) (Homo sapiens (Human)).